The following is a 159-amino-acid chain: Ribosomal RNA large subunit methyltransferase H (159 aa).

Residues Leu-76, Gly-108, and 127–132 (FSKMTF) contribute to the S-adenosyl-L-methionine site.

It belongs to the RNA methyltransferase RlmH family. As to quaternary structure, homodimer.

The protein localises to the cytoplasm. The catalysed reaction is pseudouridine(1915) in 23S rRNA + S-adenosyl-L-methionine = N(3)-methylpseudouridine(1915) in 23S rRNA + S-adenosyl-L-homocysteine + H(+). Its function is as follows. Specifically methylates the pseudouridine at position 1915 (m3Psi1915) in 23S rRNA. This is Ribosomal RNA large subunit methyltransferase H from Clostridium kluyveri (strain NBRC 12016).